The following is a 148-amino-acid chain: Aspartate carbamoyltransferase regulatory chain (148 aa).

4 residues coordinate Zn(2+): Cys106, Cys111, Cys134, and Cys137.

Belongs to the PyrI family. In terms of assembly, contains catalytic and regulatory chains. Zn(2+) serves as cofactor.

Involved in allosteric regulation of aspartate carbamoyltransferase. The protein is Aspartate carbamoyltransferase regulatory chain of Methanococcus maripaludis (strain C6 / ATCC BAA-1332).